We begin with the raw amino-acid sequence, 197 residues long: uncharacterized protein (197 aa).

The signal sequence occupies residues 1–19 (MKLASLLVGSLMLAVPALA).

It localises to the secreted. This is an uncharacterized protein from Arthroderma benhamiae (strain ATCC MYA-4681 / CBS 112371) (Trichophyton mentagrophytes).